Consider the following 193-residue polypeptide: Corrinoid adenosyltransferase (193 aa).

ATP is bound by residues 10 to 18, K28, 137 to 142, and N163; these read TRTGDDGTT and RRAERS.

It belongs to the Cob(I)alamin adenosyltransferase family.

The protein localises to the cytoplasm. It carries out the reaction 2 cob(II)yrinate a,c diamide + reduced [electron-transfer flavoprotein] + 2 ATP = 2 adenosylcob(III)yrinate a,c-diamide + 2 triphosphate + oxidized [electron-transfer flavoprotein] + 3 H(+). The catalysed reaction is 2 cob(II)alamin + reduced [electron-transfer flavoprotein] + 2 ATP = 2 adenosylcob(III)alamin + 2 triphosphate + oxidized [electron-transfer flavoprotein] + 3 H(+). The protein operates within cofactor biosynthesis; adenosylcobalamin biosynthesis; adenosylcobalamin from cob(II)yrinate a,c-diamide: step 2/7. The protein is Corrinoid adenosyltransferase of Mycobacterium bovis (strain ATCC BAA-935 / AF2122/97).